The following is a 544-amino-acid chain: Phenylalanine--tRNA ligase beta subunit (544 aa).

Positions 268–343 (LIHKIQNVRE…MSIGYNNLEP (76 aa)) constitute a B5 domain. Mg(2+) is bound by residues Asp-321, Asp-327, Glu-330, and Asp-331.

This sequence belongs to the phenylalanyl-tRNA synthetase beta subunit family. Type 2 subfamily. In terms of assembly, tetramer of two alpha and two beta subunits. Mg(2+) serves as cofactor.

The protein resides in the cytoplasm. The catalysed reaction is tRNA(Phe) + L-phenylalanine + ATP = L-phenylalanyl-tRNA(Phe) + AMP + diphosphate + H(+). This chain is Phenylalanine--tRNA ligase beta subunit, found in Saccharolobus solfataricus (strain ATCC 35092 / DSM 1617 / JCM 11322 / P2) (Sulfolobus solfataricus).